The primary structure comprises 449 residues: Signal recognition particle protein (449 aa).

Residues 109 to 116 (GLQGSGKT), 191 to 195 (DTAGR), and 249 to 252 (SRID) contribute to the GTP site.

Belongs to the GTP-binding SRP family. SRP54 subfamily. Part of the signal recognition particle protein translocation system, which is composed of SRP and FtsY. SRP is a ribonucleoprotein composed of Ffh and a 4.5S RNA molecule.

The protein localises to the cytoplasm. It catalyses the reaction GTP + H2O = GDP + phosphate + H(+). Functionally, involved in targeting and insertion of nascent membrane proteins into the cytoplasmic membrane. Binds to the hydrophobic signal sequence of the ribosome-nascent chain (RNC) as it emerges from the ribosomes. The SRP-RNC complex is then targeted to the cytoplasmic membrane where it interacts with the SRP receptor FtsY. Interaction with FtsY leads to the transfer of the RNC complex to the Sec translocase for insertion into the membrane, the hydrolysis of GTP by both Ffh and FtsY, and the dissociation of the SRP-FtsY complex into the individual components. This Rickettsia bellii (strain RML369-C) protein is Signal recognition particle protein.